The primary structure comprises 187 residues: Small ribosomal subunit protein uS5 (187 aa).

The segment at 1–20 (MAERENRRDRRDDRSREETP) is disordered. An S5 DRBM domain is found at 22-85 (FADRLVAINR…EQAKRQMIRV (64 aa)). The tract at residues 154–174 (DGLKRESSPRQVAQRRGKKVA) is disordered.

Belongs to the universal ribosomal protein uS5 family. In terms of assembly, part of the 30S ribosomal subunit. Contacts proteins S4 and S8.

Its function is as follows. With S4 and S12 plays an important role in translational accuracy. Located at the back of the 30S subunit body where it stabilizes the conformation of the head with respect to the body. The polypeptide is Small ribosomal subunit protein uS5 (Cereibacter sphaeroides (strain ATCC 17025 / ATH 2.4.3) (Rhodobacter sphaeroides)).